The primary structure comprises 59 residues: Large ribosomal subunit protein bL32 (59 aa).

Basic residues predominate over residues 1–20 (MAVPKKKTSKGKRNQRHATW). Residues 1 to 22 (MAVPKKKTSKGKRNQRHATWKG) are disordered.

It belongs to the bacterial ribosomal protein bL32 family.

The chain is Large ribosomal subunit protein bL32 from Prochlorococcus marinus (strain NATL1A).